Reading from the N-terminus, the 79-residue chain is DNA-directed RNA polymerase subunit omega (79 aa).

The protein belongs to the RNA polymerase subunit omega family. In terms of assembly, in cyanobacteria the RNAP catalytic core is composed of 2 alpha, 1 beta, 1 beta', 1 gamma and 1 omega subunit. When a sigma factor is associated with the core the holoenzyme is formed, which can initiate transcription.

The catalysed reaction is RNA(n) + a ribonucleoside 5'-triphosphate = RNA(n+1) + diphosphate. Functionally, promotes RNA polymerase assembly. Latches the N- and C-terminal regions of the beta' subunit thereby facilitating its interaction with the beta and alpha subunits. The chain is DNA-directed RNA polymerase subunit omega from Synechococcus sp. (strain JA-2-3B'a(2-13)) (Cyanobacteria bacterium Yellowstone B-Prime).